The following is a 217-amino-acid chain: 3-isopropylmalate dehydratase small subunit (217 aa).

It belongs to the LeuD family. LeuD type 1 subfamily. In terms of assembly, heterodimer of LeuC and LeuD.

It catalyses the reaction (2R,3S)-3-isopropylmalate = (2S)-2-isopropylmalate. The protein operates within amino-acid biosynthesis; L-leucine biosynthesis; L-leucine from 3-methyl-2-oxobutanoate: step 2/4. Functionally, catalyzes the isomerization between 2-isopropylmalate and 3-isopropylmalate, via the formation of 2-isopropylmaleate. This Delftia acidovorans (strain DSM 14801 / SPH-1) protein is 3-isopropylmalate dehydratase small subunit.